The primary structure comprises 318 residues: Na(+)-translocating ferredoxin:NAD(+) oxidoreductase complex subunit D (318 aa).

The next 3 helical transmembrane spans lie at 35–55, 77–99, and 114–134; these read LAVA…ICVI, WSAV…WWIG, and FGGL…FLLA. The residue at position 156 (Thr156) is an FMN phosphoryl threonine. A run of 3 helical transmembrane segments spans residues 182–202, 206–226, and 261–281; these read VYGC…LYLI, IISW…ALLV, and IIYA…GGYP.

It belongs to the NqrB/RnfD family. As to quaternary structure, the complex is composed of six subunits: RnfA, RnfB, RnfC, RnfD, RnfE and RnfG. It depends on FMN as a cofactor.

Its subcellular location is the cell membrane. The enzyme catalyses 2 reduced [2Fe-2S]-[ferredoxin] + Na(+)(in) + NAD(+) + H(+) = 2 oxidized [2Fe-2S]-[ferredoxin] + Na(+)(out) + NADH. In terms of biological role, part of a membrane-bound complex that couples electron transfer with translocation of ions across the membrane. Couples electron transfer from reduced ferredoxin to NAD(+) with electrogenic movement of Na(+) out of the cell. Involved in caffeate respiration. The protein is Na(+)-translocating ferredoxin:NAD(+) oxidoreductase complex subunit D of Acetobacterium woodii (strain ATCC 29683 / DSM 1030 / JCM 2381 / KCTC 1655 / WB1).